We begin with the raw amino-acid sequence, 549 residues long: Cation/acetate symporter ActP (549 aa).

A run of 13 helical transmembrane segments spans residues 33–53 (WQAI…TYWA), 77–97 (LAIA…ALVF), 103–123 (GLIY…LIAE), 148–168 (ILSA…QMVG), 183–203 (IAVV…GMLA), 206–226 (WVQI…AFMV), 262–282 (ISAL…PHIL), 303–323 (GFMG…IMLV), 355–375 (LFLG…VAGL), 404–424 (VSKI…VLFE), 428–448 (IAFM…PIIL), 464–484 (GGWL…TIWV), and 493–513 (IFPY…GIWF).

The protein belongs to the sodium:solute symporter (SSF) (TC 2.A.21) family.

The protein localises to the cell inner membrane. Functionally, transports acetate. This is Cation/acetate symporter ActP from Escherichia coli O6:K15:H31 (strain 536 / UPEC).